The primary structure comprises 358 residues: MTAAQAKTTKKNTAAAAQEAAGAAQPSGLGLDSIGDLSSLLDAPAASQGGSGPIELDLDLIDEDPHQPRTADNPGFSPESIAEIGATIKERGVKSPISVRENQEQPGRYIINHGARRYRGSKWAGKKSIPAFIDNDYNEADQVIENLQRNELTPREIADFIGRELAKGKKKGDIAKEIGKSPAFITQHVTLLDLPEKIADAFNTGRVRDVTVVNELVTAFKKRPEEVEAWLDDDTQEITRGTVKLLREFLDEKGRDPNTVDAFNGQTDAERDAEAGDGQDGEDGDQDGKDAKEKGAKEPDPDKLKKAIVQVEHDERPARLILNRRPPAEGYAWLKYEDDGQEFEANLADVKLVALIEG.

A compositionally biased stretch (low complexity) spans 1–42 (MTAAQAKTTKKNTAAAAQEAAGAAQPSGLGLDSIGDLSSLLD). Disordered stretches follow at residues 1-79 (MTAA…FSPE) and 256-305 (DPNT…DKLK). The span at 275–285 (AGDGQDGEDGD) shows a compositional bias: acidic residues. Residues 286–305 (QDGKDAKEKGAKEPDPDKLK) show a composition bias toward basic and acidic residues.

The protein belongs to the ParB family.

In terms of biological role, in conjunction with KorA, inhibits the transcription of the kilA, trfA and korAB operons. Is also involved in the negative control of the kilB operon. The chain is Transcriptional repressor protein KorB (korB) from Escherichia coli.